Reading from the N-terminus, the 236-residue chain is Urease accessory protein UreG 2 (236 aa).

Residues 1 to 40 (MEASVHIGNSVPHAHLHSAAPARPADPVRPDGSRRALRIG) are disordered. 43 to 50 (GPVGSGKT) is a binding site for GTP.

The protein belongs to the SIMIBI class G3E GTPase family. UreG subfamily. Homodimer. UreD, UreF and UreG form a complex that acts as a GTP-hydrolysis-dependent molecular chaperone, activating the urease apoprotein by helping to assemble the nickel containing metallocenter of UreC. The UreE protein probably delivers the nickel.

The protein resides in the cytoplasm. Functionally, facilitates the functional incorporation of the urease nickel metallocenter. This process requires GTP hydrolysis, probably effectuated by UreG. The polypeptide is Urease accessory protein UreG 2 (Saccharopolyspora erythraea (strain ATCC 11635 / DSM 40517 / JCM 4748 / NBRC 13426 / NCIMB 8594 / NRRL 2338)).